Consider the following 23-residue polypeptide: Augerpeptide hhe7a (23 aa).

Intrachain disulfides connect cysteine 3-cysteine 11, cysteine 6-cysteine 19, and cysteine 10-cysteine 22.

In terms of tissue distribution, expressed by the venom duct.

The protein resides in the secreted. Causes abnormal twist followed by immobility when injected into C.elegans. This is Augerpeptide hhe7a from Hastula hectica (Sea snail).